Reading from the N-terminus, the 484-residue chain is MEKFHAQYEMLETIGQGGCAKVKLARHRLTGTHVAVKMIPKREYWCKLLMFEAELLMMFNHPNIISLLQVIETKKKVYLIMELCEGKSLYQHIQNAGYLQEDEARPLFKQLLSAMNYCHNQGIVHRDLTPDNIMVEKDGRVKNIDFGLSTHVKPGQKLNLFCGTYPFSAPEVLLSRPYGGPKIDVWTLGVVLYFMVIGKIPFDAASIEKLRKQIVAGKYSAPCRLSVKLQHLINLLMTDNPELRPTVAEVMVHPWITKGSGVFPDPCEEQIPLKPDPAIVKPMGHIGFQAQDIEDSLRQRKFNETMASYCLLKKQILKECDRPIRDQPMNPSVTPFPSLVDTPTFHLGLRRRETEPTGLRLSANRQVSVCGKSTSKKRDRSFIWPGVLSRPINTTPTMDQTHTRTRSVPCIYSNVCTIHPNSIDESTEGHTSASAEDKPVHSRGWPRGIKGWTRKIGNAMRKLCCCIPSKETSHLGQSRVCPKK.

Residues Y8–I256 form the Protein kinase domain. Residues I14 to V22 and K37 contribute to the ATP site. Catalysis depends on D127, which acts as the Proton acceptor. In terms of domain architecture, UBA spans K274–K314. The segment covering I423 to S434 has biased composition (polar residues). Residues I423–R447 are disordered.

This sequence belongs to the protein kinase superfamily. Tyr protein kinase family. Smok subfamily. In terms of tissue distribution, testis-specific. Expressed in the testis from 22 days postpartum (22 dpp).

The enzyme catalyses L-seryl-[protein] + ATP = O-phospho-L-seryl-[protein] + ADP + H(+). It catalyses the reaction L-threonyl-[protein] + ATP = O-phospho-L-threonyl-[protein] + ADP + H(+). Functionally, may play a role in sperm motility, especially in the regulation of flagellar function. This is Sperm motility kinase 1 (Smok1) from Mus musculus (Mouse).